A 310-amino-acid chain; its full sequence is MVKVYAPASSANMSVGFDVLGAAVTPVDGALLGDVVTVEAAETFSLNNLGRFADKLPSEPRENIVYQCWERFCQELGKQIPVAMALEKNMPIGSGLGSSACSVVAALMAMNEHCGKPLNDTRLLALMGELEGRISGSIHYDNVAPCFLGGMQLMIEENDIISQQVPGFDEWLWVLAYPGIKVSTAEARAILPAQYRRQDCIAHGRHLAGFIHACYSRQPELAAKLMKDVIAEPYRERLLPGFRQARQAVAEIGAVASGISGSGPTLFALCDKPDTAQRVADWLGKNYLQNQEGFVHICRLDTAGARVLEN.

91-101 (PIGSGLGSSAC) is an ATP binding site.

Belongs to the GHMP kinase family. Homoserine kinase subfamily.

It localises to the cytoplasm. It catalyses the reaction L-homoserine + ATP = O-phospho-L-homoserine + ADP + H(+). Its pathway is amino-acid biosynthesis; L-threonine biosynthesis; L-threonine from L-aspartate: step 4/5. Functionally, catalyzes the ATP-dependent phosphorylation of L-homoserine to L-homoserine phosphate. The protein is Homoserine kinase of Escherichia coli O17:K52:H18 (strain UMN026 / ExPEC).